An 841-amino-acid chain; its full sequence is Toll-like receptor 4 (841 aa).

An N-terminal signal peptide occupies residues 1–23 (MMARARLAAALIPATAILSCLRT). Residues 24–632 (ESWDPCVQVV…FRNATCQLSK (609 aa)) lie on the Extracellular side of the membrane. The cysteines at positions 29 and 40 are disulfide-linked. N-linked (GlcNAc...) asparagine glycosylation is found at asparagine 35 and asparagine 73. 7 LRR repeats span residues 55 to 76 (STKM…NFSS), 79 to 100 (ELQV…TFQG), 103 to 124 (HLST…AFSG), 127 to 148 (SLQK…PIGH), 151 to 172 (NLKE…EYFS), 176 to 197 (NLEH…DVKV), and 205 to 225 (NLSL…TFKE). N-linked (GlcNAc...) asparagine glycosylation is found at asparagine 205, asparagine 238, asparagine 282, and asparagine 309. An intrachain disulfide couples cysteine 281 to cysteine 306. LRR repeat units follow at residues 352-373 (SLKK…FQLP), 374-394 (SLQY…CSHT), 400-422 (NLKH…MGLE), 423-444 (QLEH…SAFL), 448-469 (NLRY…IFTG), 472-495 (SLQT…FTEL), 497-518 (NLTV…AFHS), 521-542 (SLQV…LYEP), and 545-568 (SLRI…QNLP). Cysteine 390 and cysteine 391 are oxidised to a cystine. Asparagine 497 and asparagine 526 each carry an N-linked (GlcNAc...) asparagine glycan. Asparagine 575 carries N-linked (GlcNAc...) asparagine glycosylation. An LRRCT domain is found at 579–630 (NAFACVCEHQSFLQWVKDQRQLLVGAEQMMCAEPLDMEDMPVLSFRNATCQL). 2 cysteine pairs are disulfide-bonded: cysteine 583-cysteine 609 and cysteine 585-cysteine 628. The N-linked (GlcNAc...) asparagine glycan is linked to asparagine 625. Residues 633 to 653 (TIISVSVVTVLLVSVVGVLVY) form a helical membrane-spanning segment. At 654–841 (KFYFHLMLLA…TNPQEATTST (188 aa)) the chain is on the cytoplasmic side. Residues 673 to 816 (SIYDAFVIYS…VFWRRLRKAL (144 aa)) enclose the TIR domain. A disordered region spans residues 820–841 (KPQSPEGTADAETNPQEATTST). Polar residues predominate over residues 830 to 841 (AETNPQEATTST).

It belongs to the Toll-like receptor family. Belongs to the lipopolysaccharide (LPS) receptor, a multi-protein complex containing at least CD14, LY96 and TLR4. Binding to bacterial LPS leads to homodimerization. Interacts with LY96 via the extracellular domain. Interacts with MYD88 and TIRAP via their respective TIR domains. Interacts with TICAM2. Interacts with NOX4. Interacts with CNPY3 and HSP90B1; this interaction is required for proper folding in the endoplasmic reticulum. Interacts with MAP3K21; this interaction leads to negative regulation of TLR4 signaling. Interacts with CD36, following CD36 stimulation by oxLDL or amyloid-beta 42, and forms a heterodimer with TLR6. The trimeric complex is internalized and triggers inflammatory response. LYN kinase activity facilitates TLR4-TLR6 heterodimerization and signal initiation. Interacts with TICAM1 in response to LPS in a WDFY1-dependent manner. Interacts with WDFY1 in response to LPS. Interacts with SMPDL3B. Interacts with CEACAM1; upon lipopolysaccharide stimulation, forms a complex including TLR4 and the phosphorylated form of SYK and CEACAM1, which in turn, recruits PTPN6 that dephosphorylates SYK, reducing the production of reactive oxygen species (ROS) and lysosome disruption, which in turn, reduces the activity of the inflammasome. Interacts with RFTN1; the interaction occurs in response to lipopolysaccharide stimulation. Interacts with SCIMP; the interaction occurs in response to lipopolysaccharide stimulation and is enhanced by phosphorylation of SCIMP by LYN. This interaction facilitates the phosphorylation of TLR4 by LYN which elicits a selective cytokine response in macrophages. Interacts with TRAF3IP3. Interacts with TREM1; this interaction enhances TLR4-mediated inflammatory response. Interacts with ZG16B/PAUF. Interacts with CD82; this interaction inhibits TLR4-mediated signaling pathway. Post-translationally, phosphorylated on tyrosine residues by LYN after binding lipopolysaccharide. In terms of processing, ubiquitinated by RNF128 via 'Lys-28'-linked polyubiquitin chains, leading to proteasomal degradation.

It is found in the cell membrane. The protein localises to the early endosome. It localises to the cell projection. Its subcellular location is the ruffle. Functionally, transmembrane receptor that functions as a pattern recognition receptor recognizing pathogen- and damage-associated molecular patterns (PAMPs and DAMPs) to induce innate immune responses via downstream signaling pathways. At the plasma membrane, cooperates with LY96 to mediate the innate immune response to bacterial lipopolysaccharide (LPS). Also involved in LPS-independent inflammatory responses triggered by free fatty acids, such as palmitate, and Ni(2+). Mechanistically, acts via MYD88, TIRAP and TRAF6, leading to NF-kappa-B activation, cytokine secretion and the inflammatory response. Alternatively, CD14-mediated TLR4 internalization via endocytosis is associated with the initiation of a MYD88-independent signaling via the TICAM1-TBK1-IRF3 axis leading to type I interferon production. In addition to the secretion of proinflammatory cytokines, initiates the activation of NLRP3 inflammasome and formation of a positive feedback loop between autophagy and NF-kappa-B signaling cascade. In complex with TLR6, promotes inflammation in monocytes/macrophages by associating with TLR6 and the receptor CD86. Upon ligand binding, such as oxLDL or amyloid-beta 42, the TLR4:TLR6 complex is internalized and triggers inflammatory response, leading to NF-kappa-B-dependent production of CXCL1, CXCL2 and CCL9 cytokines, via MYD88 signaling pathway, and CCL5 cytokine, via TICAM1 signaling pathway. In myeloid dendritic cells, vesicular stomatitis virus glycoprotein G but not LPS promotes the activation of IRF7, leading to type I IFN production in a CD14-dependent manner. This chain is Toll-like receptor 4 (TLR4), found in Bos taurus (Bovine).